Consider the following 406-residue polypeptide: Tyrosine--tRNA ligase (406 aa).

Tyr-35 provides a ligand contact to L-tyrosine. Residues 40–49 carry the 'HIGH' region motif; sequence ATSTSLHIGH. L-tyrosine is bound by residues Tyr-166 and Gln-170. A 'KMSKS' region motif is present at residues 226 to 230; that stretch reads KMGKS. Residue Lys-229 participates in ATP binding. Residues 341-405 form the S4 RNA-binding domain; that stretch reads ILLVDLMVSS…IGKKKILRII (65 aa).

This sequence belongs to the class-I aminoacyl-tRNA synthetase family. TyrS type 1 subfamily. In terms of assembly, homodimer.

It is found in the cytoplasm. The enzyme catalyses tRNA(Tyr) + L-tyrosine + ATP = L-tyrosyl-tRNA(Tyr) + AMP + diphosphate + H(+). Functionally, catalyzes the attachment of tyrosine to tRNA(Tyr) in a two-step reaction: tyrosine is first activated by ATP to form Tyr-AMP and then transferred to the acceptor end of tRNA(Tyr). This Borrelia hermsii (strain HS1 / DAH) protein is Tyrosine--tRNA ligase.